We begin with the raw amino-acid sequence, 324 residues long: Phospho-N-acetylmuramoyl-pentapeptide-transferase (324 aa).

9 helical membrane passes run 5–25 (VILF…PIFI), 51–71 (TPTM…IVMI), 77–97 (ISPE…LGFL), 117–137 (LIGQ…YQFA), 147–167 (VSFD…VGGS), 176–196 (LDGL…ILAW), 203–223 (VAIF…FNAH), 227–248 (VFMG…AILT), and 302–322 (VVVT…YIEV).

The protein belongs to the glycosyltransferase 4 family. MraY subfamily. The cofactor is Mg(2+).

The protein localises to the cell membrane. It carries out the reaction UDP-N-acetyl-alpha-D-muramoyl-L-alanyl-gamma-D-glutamyl-meso-2,6-diaminopimeloyl-D-alanyl-D-alanine + di-trans,octa-cis-undecaprenyl phosphate = di-trans,octa-cis-undecaprenyl diphospho-N-acetyl-alpha-D-muramoyl-L-alanyl-D-glutamyl-meso-2,6-diaminopimeloyl-D-alanyl-D-alanine + UMP. It functions in the pathway cell wall biogenesis; peptidoglycan biosynthesis. Its function is as follows. Catalyzes the initial step of the lipid cycle reactions in the biosynthesis of the cell wall peptidoglycan: transfers peptidoglycan precursor phospho-MurNAc-pentapeptide from UDP-MurNAc-pentapeptide onto the lipid carrier undecaprenyl phosphate, yielding undecaprenyl-pyrophosphoryl-MurNAc-pentapeptide, known as lipid I. The chain is Phospho-N-acetylmuramoyl-pentapeptide-transferase from Bacillus pumilus (strain SAFR-032).